The sequence spans 329 residues: Cathepsin K (329 aa).

An N-terminal signal peptide occupies residues 1 to 15; the sequence is MWGLKVLLLPVVSFA. Positions 16-114 are cleaved as a propeptide — activation peptide; sequence LYPEEILDTH…TLYIPEWEGR (99 aa). Residue N103 is glycosylated (N-linked (GlcNAc...) asparagine). 3 disulfide bridges follow: C136–C177, C170–C210, and C269–C318. C139 is an active-site residue. Residues H276 and N296 contribute to the active site.

This sequence belongs to the peptidase C1 family. Predominantly expressed in osteoclasts (bones). Expressed in thyroid epithelial cells.

The protein localises to the lysosome. It localises to the secreted. It is found in the apical cell membrane. It catalyses the reaction Broad proteolytic activity. With small-molecule substrates and inhibitors, the major determinant of specificity is P2, which is preferably Leu, Met &gt; Phe, and not Arg.. In terms of biological role, thiol protease involved in osteoclastic bone resorption and may participate partially in the disorder of bone remodeling. Displays potent endoprotease activity against fibrinogen at acid pH. May play an important role in extracellular matrix degradation. Involved in the release of thyroid hormone thyroxine (T4) by limited proteolysis of TG/thyroglobulin in the thyroid follicle lumen. The polypeptide is Cathepsin K (CTSK) (Homo sapiens (Human)).